Here is a 333-residue protein sequence, read N- to C-terminus: Tetraacyldisaccharide 4'-kinase (333 aa).

Position 60 to 67 (60 to 67) interacts with ATP; sequence TVGGTGKT.

This sequence belongs to the LpxK family.

It catalyses the reaction a lipid A disaccharide + ATP = a lipid IVA + ADP + H(+). It functions in the pathway glycolipid biosynthesis; lipid IV(A) biosynthesis; lipid IV(A) from (3R)-3-hydroxytetradecanoyl-[acyl-carrier-protein] and UDP-N-acetyl-alpha-D-glucosamine: step 6/6. Transfers the gamma-phosphate of ATP to the 4'-position of a tetraacyldisaccharide 1-phosphate intermediate (termed DS-1-P) to form tetraacyldisaccharide 1,4'-bis-phosphate (lipid IVA). This is Tetraacyldisaccharide 4'-kinase from Ectopseudomonas mendocina (strain ymp) (Pseudomonas mendocina).